The primary structure comprises 219 residues: Inner membrane protein YghB (219 aa).

At 1–17 (MAVIQDIIAALWQHDFA) the chain is on the cytoplasmic side. The chain crosses the membrane as a helical span at residues 18 to 38 (ALANPHVVSVVYFVMFATLFL). Residues 39-67 (ENGLLPASFLPGDSLLLLAGALIAQDVMH) lie on the Periplasmic side of the membrane. Residues 68-88 (FLPTIGILTAAASLGCWLSYI) traverse the membrane as a helical segment. Topologically, residues 89–160 (QGRWLGNTRT…RRFQFFNWLS (72 aa)) are cytoplasmic. The chain crosses the membrane as a helical span at residues 161-181 (GLLWVTVVTSFGYALSMIPFV). Residues 182–191 (KRHEDQVMTF) are Periplasmic-facing. The helical transmembrane segment at 192–212 (LMILPVALLVAGLLGTLVVVI) threads the bilayer. At 213-219 (KKKYCNA) the chain is on the cytoplasmic side.

This sequence belongs to the DedA family.

The protein resides in the cell inner membrane. The protein is Inner membrane protein YghB (yghB) of Salmonella typhimurium (strain LT2 / SGSC1412 / ATCC 700720).